The following is a 53-amino-acid chain: Photosystem II reaction center protein K (53 aa).

The propeptide occupies 1–16 (MLKFYLENVFHLIFFA). The chain crosses the membrane as a helical span at residues 28-48 (IVNVMPIIPLFFFLLAFVWQA).

This sequence belongs to the PsbK family. In terms of assembly, PSII is composed of 1 copy each of membrane proteins PsbA, PsbB, PsbC, PsbD, PsbE, PsbF, PsbH, PsbI, PsbJ, PsbK, PsbL, PsbM, PsbT, PsbX, PsbY, PsbZ, Psb30/Ycf12, at least 3 peripheral proteins of the oxygen-evolving complex and a large number of cofactors. It forms dimeric complexes.

It localises to the plastid. The protein resides in the chloroplast thylakoid membrane. Functionally, one of the components of the core complex of photosystem II (PSII). PSII is a light-driven water:plastoquinone oxidoreductase that uses light energy to abstract electrons from H(2)O, generating O(2) and a proton gradient subsequently used for ATP formation. It consists of a core antenna complex that captures photons, and an electron transfer chain that converts photonic excitation into a charge separation. This chain is Photosystem II reaction center protein K, found in Huperzia lucidula (Shining clubmoss).